We begin with the raw amino-acid sequence, 463 residues long: Phosphoglucosamine mutase (463 aa).

S102 serves as the catalytic Phosphoserine intermediate. Residues S102, D240, D242, and D244 each coordinate Mg(2+). S102 is subject to Phosphoserine.

It belongs to the phosphohexose mutase family. Mg(2+) serves as cofactor. Post-translationally, activated by phosphorylation.

The enzyme catalyses alpha-D-glucosamine 1-phosphate = D-glucosamine 6-phosphate. Its function is as follows. Catalyzes the conversion of glucosamine-6-phosphate to glucosamine-1-phosphate. This Mycobacterium leprae (strain Br4923) protein is Phosphoglucosamine mutase.